A 323-amino-acid polypeptide reads, in one-letter code: tRNA(Ile)-lysidine synthase (323 aa).

Position 33–38 (33–38 (SGGSDS)) interacts with ATP.

Belongs to the tRNA(Ile)-lysidine synthase family.

The protein localises to the cytoplasm. The catalysed reaction is cytidine(34) in tRNA(Ile2) + L-lysine + ATP = lysidine(34) in tRNA(Ile2) + AMP + diphosphate + H(+). Functionally, ligates lysine onto the cytidine present at position 34 of the AUA codon-specific tRNA(Ile) that contains the anticodon CAU, in an ATP-dependent manner. Cytidine is converted to lysidine, thus changing the amino acid specificity of the tRNA from methionine to isoleucine. The polypeptide is tRNA(Ile)-lysidine synthase (Mycobacterium leprae (strain TN)).